Consider the following 335-residue polypeptide: Aliphatic sulfonates import ATP-binding protein SsuB (335 aa).

A disordered region spans residues 29-61 (DGDAQDAAVYERDGGAHAPPFASGGAPPDGDRA). Residues 74 to 293 (VRLTRVSKRY…ARASAAFAAL (220 aa)) enclose the ABC transporter domain. 106–113 (GRSGCGKS) lines the ATP pocket. A disordered region spans residues 308-335 (APAAPNAAGPEGASRGRAAPASGLRWAV).

The protein belongs to the ABC transporter superfamily. Aliphatic sulfonates importer (TC 3.A.1.17.2) family. In terms of assembly, the complex is composed of two ATP-binding proteins (SsuB), two transmembrane proteins (SsuC) and a solute-binding protein (SsuA).

It localises to the cell inner membrane. The enzyme catalyses ATP + H2O + aliphatic sulfonate-[sulfonate-binding protein]Side 1 = ADP + phosphate + aliphatic sulfonateSide 2 + [sulfonate-binding protein]Side 1.. In terms of biological role, part of the ABC transporter complex SsuABC involved in aliphatic sulfonates import. Responsible for energy coupling to the transport system. This is Aliphatic sulfonates import ATP-binding protein SsuB from Burkholderia pseudomallei (strain 1710b).